Reading from the N-terminus, the 531-residue chain is Dihydropyrimidinase (531 aa).

Residues His103, His105, and Lys193 each contribute to the Zn(2+) site. The residue at position 193 (Lys193) is an N6-carboxylysine. Position 198 (Tyr198) interacts with substrate. Zn(2+) is bound by residues His226 and His282. A substrate-binding site is contributed by Ser332. Asp359 is a binding site for Zn(2+). A substrate-binding site is contributed by Asn380.

Belongs to the metallo-dependent hydrolases superfamily. Hydantoinase/dihydropyrimidinase family. In terms of assembly, homotetramer. The cofactor is Zn(2+). Post-translationally, carboxylation allows a single lysine to coordinate two zinc ions.

Its subcellular location is the endoplasmic reticulum. It catalyses the reaction 5,6-dihydrouracil + H2O = 3-(carbamoylamino)propanoate + H(+). It functions in the pathway amino-acid biosynthesis; beta-alanine biosynthesis. In terms of biological role, catalyzes the second step of the reductive pyrimidine degradation, the reversible hydrolytic ring opening of dihydropyrimidines. Can catalyze the ring opening of 5,6-dihydrouracil to N-carbamoyl-alanine and of 5,6-dihydrothymine to N-carbamoyl-amino isobutyrate. Involved in the recycling of nitrogen from nucleobases to general nitrogen metabolism. The chain is Dihydropyrimidinase from Arabidopsis thaliana (Mouse-ear cress).